The sequence spans 844 residues: Lysine-specific histone demethylase 1 homolog 1 (844 aa).

Positions 1–18 are enriched in basic and acidic residues; it reads MSTETKETRPETKPEDLG. The tract at residues 1–131 is disordered; the sequence is MSTETKETRP…PGPRARKRRR (131 aa). A compositionally biased stretch (acidic residues) spans 26 to 40; the sequence is PGEEPLGELIADDVN. Polar residues-rich tracts occupy residues 46–62 and 107–118; these read ASAT…QSEQ and DLVTEQQSQNPN. The SWIRM domain occupies 154–255; that stretch reads GKEVDSEALI…FGLAPVIKEA (102 aa). Residues Glu295, Arg297, and Arg303 each contribute to the FAD site. Positions 516-523 match the Nuclear localization signal motif; sequence LKKGSIEF. Glu679 contacts FAD.

The protein belongs to the flavin monoamine oxidase family. Interacts with CZS. Interacts with OTU6/OTLD1. FAD serves as cofactor. As to expression, expressed in the shoot and root apical regions of young seedlings. Expressed in cotyledons and inflorescences.

It is found in the nucleus. Its subcellular location is the cytoplasm. Functionally, probable histone demethylase that reduces the levels of histone H3 'Lys-4' methylation in chromatin of the floral repressor FLOWERING LOCUS C (FLC) and the sporophytically silenced floral repressor FWA. Seems to act in partial redundancy with FLOWERING LOCUS D (FLD) to repress FLC expression. Required for cytosine methylation of FWA. Controls primary seed dormancy by regulating DOG1 and abscisic acid signaling-related genes. In association with OTU6/OTLD1, involved in transcriptional gene repression via histone deubiquitination and demethylation. This chain is Lysine-specific histone demethylase 1 homolog 1, found in Arabidopsis thaliana (Mouse-ear cress).